The following is a 424-amino-acid chain: Enolase (424 aa).

Q164 contributes to the (2R)-2-phosphoglycerate binding site. Residue E206 is the Proton donor of the active site. The Mg(2+) site is built by D243, E284, and D311. The (2R)-2-phosphoglycerate site is built by K336, R365, S366, and K387. The active-site Proton acceptor is the K336.

This sequence belongs to the enolase family. Mg(2+) serves as cofactor.

The protein localises to the cytoplasm. Its subcellular location is the secreted. It is found in the cell surface. It carries out the reaction (2R)-2-phosphoglycerate = phosphoenolpyruvate + H2O. Its pathway is carbohydrate degradation; glycolysis; pyruvate from D-glyceraldehyde 3-phosphate: step 4/5. Catalyzes the reversible conversion of 2-phosphoglycerate (2-PG) into phosphoenolpyruvate (PEP). It is essential for the degradation of carbohydrates via glycolysis. The chain is Enolase from Wolbachia sp. subsp. Drosophila simulans (strain wRi).